Reading from the N-terminus, the 378-residue chain is UPF0754 membrane protein SH1116 (378 aa).

Transmembrane regions (helical) follow at residues 4 to 24 and 358 to 378; these read FLVI…TNVI and SLGF…AIFV.

It belongs to the UPF0754 family.

The protein localises to the cell membrane. This Staphylococcus haemolyticus (strain JCSC1435) protein is UPF0754 membrane protein SH1116.